Reading from the N-terminus, the 230-residue chain is NEDD8-conjugating enzyme Ubc12 (230 aa).

The segment at 1 to 87 (MFRLKELQKK…AELRAQKDID (87 aa)) is disordered. The segment covering 10–20 (KQQQQQQQQQQ) has biased composition (low complexity). Over residues 26-36 (TNGTDAVTTEP) the composition is skewed to polar residues. The segment covering 37–57 (TDVKRQNSNDLKEIRKQKSKD) has biased composition (basic and acidic residues). Residues 61-70 (SLKTKQSSES) show a composition bias toward polar residues. In terms of domain architecture, UBC core spans 77-221 (PAELRAQKDI…VRQSLRGGYI (145 aa)). The Glycyl thioester intermediate role is filled by Cys-159.

It belongs to the ubiquitin-conjugating enzyme family. UBC12 subfamily.

The enzyme catalyses [E1 NEDD8-activating enzyme]-S-[NEDD8 protein]-yl-L-cysteine + [E2 NEDD8-conjugating enzyme]-L-cysteine = [E1 NEDD8-activating enzyme]-L-cysteine + [E2 NEDD8-conjugating enzyme]-S-[NEDD8-protein]-yl-L-cysteine.. Its pathway is protein modification; protein neddylation. Accepts the ubiquitin-like protein nedd8 from the uba3-nae1 E1 complex and catalyzes its covalent attachment to other proteins. The chain is NEDD8-conjugating enzyme Ubc12 (ube2m) from Dictyostelium discoideum (Social amoeba).